The following is a 341-amino-acid chain: Heme A synthase (341 aa).

8 helical membrane passes run 7-27, 92-112, 118-138, 159-179, 190-210, 253-273, 280-300, and 302-322; these read VTVWLGVCCSMTLLMVVIGGI, LFGRALGAVFCLPIPYFAITK, MVAKLLMVALLGGMQGAMGWF, LFLTILLFSILWHSFLRCAGV, FFTAAAVVGLTVLQMVLGALV, FLHRLVAVLIVVCAAPLPFWL, LFLACVALQFLLGVATLVSVV, and IFLAAMHQVFGFVTLAAGVHM. Position 255 (H255) interacts with heme. H308 is a binding site for heme.

It belongs to the COX15/CtaA family. Type 2 subfamily. Interacts with CtaB. Heme b serves as cofactor.

Its subcellular location is the cell membrane. It carries out the reaction Fe(II)-heme o + 2 A + H2O = Fe(II)-heme a + 2 AH2. The protein operates within porphyrin-containing compound metabolism; heme A biosynthesis; heme A from heme O: step 1/1. Catalyzes the conversion of heme O to heme A by two successive hydroxylations of the methyl group at C8. The first hydroxylation forms heme I, the second hydroxylation results in an unstable dihydroxymethyl group, which spontaneously dehydrates, resulting in the formyl group of heme A. The protein is Heme A synthase of Anaplasma marginale (strain Florida).